The following is a 236-amino-acid chain: C-&gt;U-editing enzyme APOBEC-1 (236 aa).

The CMP/dCMP-type deaminase domain maps to 10 to 134; that stretch reads GDPTLRRRIE…QRNRQGLRDL (125 aa). His-61 is a binding site for Zn(2+). The Proton donor role is filled by Glu-63. Residues Cys-93 and Cys-96 each coordinate Zn(2+).

Belongs to the cytidine and deoxycytidylate deaminase family. As to quaternary structure, homodimer. Interacts with A1CF; form an mRNA editing complex. Interacts with RBM47; form an mRNA editing complex. Found in a complex with CELF2/CUGBP2 and A1CF. Interacts with HNRPAB. Interacts with SYNCRIP. It depends on Zn(2+) as a cofactor.

The protein localises to the cytoplasm. It localises to the nucleus. It catalyses the reaction a cytidine in mRNA + H2O + H(+) = a uridine in mRNA + NH4(+). The catalysed reaction is cytidine(6666) in apoB mRNA + H2O + H(+) = uridine(6666) in apoB mRNA + NH4(+). Cytidine deaminase catalyzing the cytidine to uridine postranscriptional editing of a variety of mRNAs. Form complexes with cofactors that confer differential editing activity and selectivity. Responsible for the postranscriptional editing of a CAA codon for Gln to a UAA codon for stop in the apolipoprotein B mRNA. Also involved in CGA (Arg) to UGA (Stop) editing in the NF1 mRNA. May also play a role in the epigenetic regulation of gene expression by participating in DNA demethylation. The sequence is that of C-&gt;U-editing enzyme APOBEC-1 from Pongo pygmaeus (Bornean orangutan).